The sequence spans 310 residues: Mycothiol acetyltransferase (310 aa).

2 N-acetyltransferase domains span residues 5 to 155 and 160 to 309; these read TTVE…HPAR and PPFR…LPAA. 80–82 lines the acetyl-CoA pocket; that stretch reads LLV. D187, K226, and E238 together coordinate 1D-myo-inositol 2-(L-cysteinylamino)-2-deoxy-alpha-D-glucopyranoside. Residue 242–244 participates in acetyl-CoA binding; the sequence is IAT. Y276 lines the 1D-myo-inositol 2-(L-cysteinylamino)-2-deoxy-alpha-D-glucopyranoside pocket. 281-286 is an acetyl-CoA binding site; that stretch reads NERALR.

It belongs to the acetyltransferase family. MshD subfamily. As to quaternary structure, monomer.

It catalyses the reaction 1D-myo-inositol 2-(L-cysteinylamino)-2-deoxy-alpha-D-glucopyranoside + acetyl-CoA = mycothiol + CoA + H(+). Its function is as follows. Catalyzes the transfer of acetyl from acetyl-CoA to desacetylmycothiol (Cys-GlcN-Ins) to form mycothiol. The protein is Mycothiol acetyltransferase of Acidimicrobium ferrooxidans (strain DSM 10331 / JCM 15462 / NBRC 103882 / ICP).